The primary structure comprises 350 residues: Fe-S cluster assembly protein dre2 (350 aa).

The segment at Thr-23–Val-156 is N-terminal SAM-like domain. A linker region spans residues Pro-157–Met-242. Residues Asn-165–Pro-209 are disordered. Positions Lys-190–Val-208 are enriched in basic and acidic residues. [2Fe-2S] cluster-binding residues include Cys-252, Cys-263, Cys-266, and Cys-268. Positions Cys-252–Cys-268 are fe-S binding site A. [4Fe-4S] cluster-binding residues include Cys-313, Cys-316, Cys-324, and Cys-327. Short sequence motifs (cx2C motif) lie at residues Cys-313 to Cys-316 and Cys-324 to Cys-327. The segment at Cys-313 to Cys-327 is fe-S binding site B.

It belongs to the anamorsin family. As to quaternary structure, monomer. Interacts with TAH18. Interacts with MIA40. [2Fe-2S] cluster serves as cofactor. The cofactor is [4Fe-4S] cluster.

Its subcellular location is the cytoplasm. It localises to the mitochondrion intermembrane space. In terms of biological role, component of the cytosolic iron-sulfur (Fe-S) protein assembly (CIA) machinery required for the maturation of extramitochondrial Fe-S proteins. Part of an electron transfer chain functioning in an early step of cytosolic Fe-S biogenesis, facilitating the de novo assembly of a [4Fe-4S] cluster on the scaffold complex CFD1-NBP35. Electrons are transferred to DRE2 from NADPH via the FAD- and FMN-containing protein TAH18. TAH18-DRE2 are also required for the assembly of the diferric tyrosyl radical cofactor of ribonucleotide reductase (RNR), probably by providing electrons for reduction during radical cofactor maturation in the catalytic small subunit RNR2. This Sclerotinia sclerotiorum (strain ATCC 18683 / 1980 / Ss-1) (White mold) protein is Fe-S cluster assembly protein dre2.